A 605-amino-acid chain; its full sequence is Lysophospholipase 1 (605 aa).

The N-terminal stretch at 1 to 17 (MILHHLLILLIINYCVA) is a signal peptide. The PLA2c domain maps to 30-565 (SCPSSQLIRS…ENYCWDGTIY (536 aa)). 7 N-linked (GlcNAc...) asparagine glycosylation sites follow: Asn-199, Asn-261, Asn-399, Asn-451, Asn-465, Asn-492, and Asn-573.

This sequence belongs to the lysophospholipase family.

It is found in the secreted. It catalyses the reaction a 1-acyl-sn-glycero-3-phosphocholine + H2O = sn-glycerol 3-phosphocholine + a fatty acid + H(+). Catalyzes the release of fatty acids from lysophospholipids. Phospholipase B may well contribute to pathogenicity by abetting the fungus in damaging and traversing host cell membranes, processes which likely increase the rapidity of disseminated infection. The polypeptide is Lysophospholipase 1 (Candida albicans (strain SC5314 / ATCC MYA-2876) (Yeast)).